A 215-amino-acid polypeptide reads, in one-letter code: Large ribosomal subunit protein bL25 (215 aa).

Composition is skewed to polar residues over residues 1 to 19 (MAKS…NTGK) and 206 to 215 (ENKTAATESE). 2 disordered regions span residues 1 to 29 (MAKS…RRDG) and 190 to 215 (AKYA…TESE).

This sequence belongs to the bacterial ribosomal protein bL25 family. CTC subfamily. In terms of assembly, part of the 50S ribosomal subunit; part of the 5S rRNA/L5/L18/L25 subcomplex. Contacts the 5S rRNA. Binds to the 5S rRNA independently of L5 and L18.

Its function is as follows. This is one of the proteins that binds to the 5S RNA in the ribosome where it forms part of the central protuberance. This Mycobacterium leprae (strain TN) protein is Large ribosomal subunit protein bL25.